The primary structure comprises 739 residues: MPEDRPIEDSPPIGEAQTDAPAGGCPAGFGRIKPPVAGGSNRDWWPNQLNLKILQKNPDVINPLDEDFDYRSAVQNLDVDALRADIVEVMHTSQDWWPADFGHYGPLFIRMAWHAAGTYRVSDGRGGAGAGMQRFAPLNSWPDNASLDKARRLLWPVKKKYGKNLSWADLIVYAGNVALEDMGFRTAGFAFGREDRWEPEEDVYWGPEQEWLDDKRYTGERDLENPLAAVQMGLIYVNPEGPNGNPDPQASAIDIRETFGRMAMNDVETAALIVGGHTFGKTHGNGDASLVGPEPEAAPLEEVGLGWRNPQGTGVGKDAITSGLEVTWTHTPTKWDNSFLEILYGNEWELTKSPAGANQWKPKDNGWANSVPLAHEDGKTHPSMLTSDLALRVDPIYEQITRRWLDHPEELAEEFAKAWFKLLHRDMGPVTRYLGPEVPKDTWLWQDNIPAGNDLSDDEVAKLKELIADSGLTVSQLVSTAWKAASTFRSSDLRGGANGGRIRLQPQLGWEANEPDELAQVVRKYEEIQKASGINVSFADLVVLGGNVGVEKAAKAAGFDVTVPFTPGRGDATQEETDVDSFAYLEPKADGFRNYLGKGSDLPAEFKLIDRANLLGLSAPEMTTLVGGLRVLDVNHGGTKHGVLTDKPGALTTDFFVNLLDMSTAWKPSPADDGTYIGTDRATGSPKWTGTRVDLVFASNSQLRALAEVYAEDDSKEKFVKDFVAAWTKVMDADRFDVA.

The disordered stretch occupies residues 1 to 33 (MPEDRPIEDSPPIGEAQTDAPAGGCPAGFGRIK). Residues 113–236 (WHAAGTYRVS…LAAVQMGLIY (124 aa)) constitute a cross-link (tryptophyl-tyrosyl-methioninium (Trp-Tyr) (with M-262)). The Proton acceptor role is filled by His114. Residues 236 to 262 (YVNPEGPNGNPDPQASAIDIRETFGRM) constitute a cross-link (tryptophyl-tyrosyl-methioninium (Tyr-Met) (with W-113)). Residue His277 participates in heme b binding.

The protein belongs to the peroxidase family. Peroxidase/catalase subfamily. Homodimer or homotetramer. Requires heme b as cofactor. Post-translationally, formation of the three residue Trp-Tyr-Met cross-link is important for the catalase, but not the peroxidase activity of the enzyme.

The catalysed reaction is H2O2 + AH2 = A + 2 H2O. The enzyme catalyses 2 H2O2 = O2 + 2 H2O. Its function is as follows. Bifunctional enzyme with both catalase and broad-spectrum peroxidase activity. May play a role in the intracellular survival of mycobacteria. This is Catalase-peroxidase 1 from Mycolicibacterium smegmatis (strain ATCC 700084 / mc(2)155) (Mycobacterium smegmatis).